The following is a 441-amino-acid chain: 3-phosphoshikimate 1-carboxyvinyltransferase (441 aa).

Residues K25, S26, and R30 each coordinate 3-phosphoshikimate. K25 lines the phosphoenolpyruvate pocket. Residues G97 and R125 each coordinate phosphoenolpyruvate. Residues S169, Q170, D311, and K338 each contribute to the 3-phosphoshikimate site. Q170 lines the phosphoenolpyruvate pocket. The Proton acceptor role is filled by D311. Residues R342, R383, and K410 each coordinate phosphoenolpyruvate.

The protein belongs to the EPSP synthase family. In terms of assembly, monomer.

The protein localises to the cytoplasm. The enzyme catalyses 3-phosphoshikimate + phosphoenolpyruvate = 5-O-(1-carboxyvinyl)-3-phosphoshikimate + phosphate. It participates in metabolic intermediate biosynthesis; chorismate biosynthesis; chorismate from D-erythrose 4-phosphate and phosphoenolpyruvate: step 6/7. In terms of biological role, catalyzes the transfer of the enolpyruvyl moiety of phosphoenolpyruvate (PEP) to the 5-hydroxyl of shikimate-3-phosphate (S3P) to produce enolpyruvyl shikimate-3-phosphate and inorganic phosphate. The sequence is that of 3-phosphoshikimate 1-carboxyvinyltransferase from Chlamydia muridarum (strain MoPn / Nigg).